Reading from the N-terminus, the 660-residue chain is Acetyl-coenzyme A synthetase (660 aa).

CoA contacts are provided by residues 197–200 (RGGK) and Thr-317. ATP-binding positions include 397–399 (GEP), 421–426 (DTFWQT), Asp-512, and Arg-528. Ser-536 is a CoA binding site. Arg-539 is an ATP binding site. The Mg(2+) site is built by Val-550 and Val-555. An N6-acetyllysine modification is found at Lys-625.

Belongs to the ATP-dependent AMP-binding enzyme family. It depends on Mg(2+) as a cofactor. Acetylated. Deacetylation by the SIR2-homolog deacetylase activates the enzyme.

The enzyme catalyses acetate + ATP + CoA = acetyl-CoA + AMP + diphosphate. In terms of biological role, catalyzes the conversion of acetate into acetyl-CoA (AcCoA), an essential intermediate at the junction of anabolic and catabolic pathways. AcsA undergoes a two-step reaction. In the first half reaction, AcsA combines acetate with ATP to form acetyl-adenylate (AcAMP) intermediate. In the second half reaction, it can then transfer the acetyl group from AcAMP to the sulfhydryl group of CoA, forming the product AcCoA. This Cupriavidus pinatubonensis (strain JMP 134 / LMG 1197) (Cupriavidus necator (strain JMP 134)) protein is Acetyl-coenzyme A synthetase.